The primary structure comprises 323 residues: tRNA U34 carboxymethyltransferase (323 aa).

Carboxy-S-adenosyl-L-methionine is bound by residues Lys91, Trp105, Lys110, Gly130, 152-154, 181-182, Met196, Tyr200, and Arg315; these read DPS and IE.

It belongs to the class I-like SAM-binding methyltransferase superfamily. CmoB family. In terms of assembly, homotetramer.

The catalysed reaction is carboxy-S-adenosyl-L-methionine + 5-hydroxyuridine(34) in tRNA = 5-carboxymethoxyuridine(34) in tRNA + S-adenosyl-L-homocysteine + H(+). Catalyzes carboxymethyl transfer from carboxy-S-adenosyl-L-methionine (Cx-SAM) to 5-hydroxyuridine (ho5U) to form 5-carboxymethoxyuridine (cmo5U) at position 34 in tRNAs. The sequence is that of tRNA U34 carboxymethyltransferase from Vibrio campbellii (strain ATCC BAA-1116).